The chain runs to 213 residues: Large ribosomal subunit protein uL1 (213 aa).

This sequence belongs to the universal ribosomal protein uL1 family. Part of the 50S ribosomal subunit.

Functionally, binds directly to 23S rRNA. Probably involved in E site tRNA release. In terms of biological role, protein L1 is also a translational repressor protein, it controls the translation of its operon by binding to its mRNA. This Methanococcoides burtonii (strain DSM 6242 / NBRC 107633 / OCM 468 / ACE-M) protein is Large ribosomal subunit protein uL1.